A 217-amino-acid polypeptide reads, in one-letter code: uncharacterized protein (217 aa).

This is an uncharacterized protein from Methanothermobacter thermautotrophicus (Methanobacterium thermoformicicum).